Here is a 400-residue protein sequence, read N- to C-terminus: Iron(III) enterobactin esterase (400 aa).

Belongs to the Fes family. As to quaternary structure, monomer.

Its subcellular location is the cytoplasm. The catalysed reaction is Fe(III)-enterobactin + 3 H2O + H(+) = Fe(III)-[N-(2,3-dihydroxybenzoyl)-L-serine] + 2 N-(2,3-dihydroxybenzoyl)-L-serine. It carries out the reaction Fe(III)-enterobactin + H2O = Fe(III)-[N-(2,3-dihydroxybenzoyl)-L-serine]3 + H(+). The enzyme catalyses Fe(III)-[N-(2,3-dihydroxybenzoyl)-L-serine]3 + H2O + H(+) = Fe(III)-[N-(2,3-dihydroxybenzoyl)-L-serine]2 + N-(2,3-dihydroxybenzoyl)-L-serine. It catalyses the reaction Fe(III)-[N-(2,3-dihydroxybenzoyl)-L-serine]2 + H2O + H(+) = Fe(III)-[N-(2,3-dihydroxybenzoyl)-L-serine] + N-(2,3-dihydroxybenzoyl)-L-serine. The catalysed reaction is enterobactin + 3 H2O = 3 N-(2,3-dihydroxybenzoyl)-L-serine + 2 H(+). Its activity is regulated as follows. Inhibited by N-ethylmaleimide. Catalyzes the hydrolysis of ferric enterobactin (Fe-Ent). Is responsible for the release of iron from ferric enterobactin. Also catalyzes the hydrolysis of iron-free enterobactin (Ent). Cleavage of ferric enterobactin results in a mixture of three hydrolysis products, 2,3-dihydroxybenzoylserine (DHBS), the linear dimer (DHBS)2 and the linear trimer (DHBS)3, while cleavage of iron-free enterobactin yields only the monomer. Hydrolysis of ferric enterobactin is less efficient than hydrolysis of unliganded enterobactin. It also cleaves the aluminum (III) complex at a rate similar to the ferric complex. The sequence is that of Iron(III) enterobactin esterase from Escherichia coli (strain K12).